The following is a 553-amino-acid chain: Undecaprenyl phosphate-alpha-4-amino-4-deoxy-L-arabinose arabinosyl transferase (553 aa).

Transmembrane regions (helical) follow at residues L8–W28, V83–F103, V111–Y131, A132–G152, V176–I196, V204–L224, A255–L275, I288–I308, I317–A337, T350–A370, V380–T400, and L407–P427.

It belongs to the glycosyltransferase 83 family.

Its subcellular location is the cell inner membrane. The enzyme catalyses 4-amino-4-deoxy-alpha-L-arabinopyranosyl di-trans,octa-cis-undecaprenyl phosphate + lipid IVA = lipid IIA + di-trans,octa-cis-undecaprenyl phosphate.. It participates in lipopolysaccharide metabolism; 4-amino-4-deoxy-beta-L-arabinose-lipid A biosynthesis. Catalyzes the transfer of the L-Ara4N moiety of the glycolipid undecaprenyl phosphate-alpha-L-Ara4N to lipid A. The modified arabinose is attached to lipid A and is required for resistance to polymyxin and cationic antimicrobial peptides. The protein is Undecaprenyl phosphate-alpha-4-amino-4-deoxy-L-arabinose arabinosyl transferase of Enterobacter sp. (strain 638).